Consider the following 164-residue polypeptide: NADH-quinone oxidoreductase subunit B (164 aa).

Residues Cys38, Cys39, Cys104, and Cys133 each coordinate [4Fe-4S] cluster.

This sequence belongs to the complex I 20 kDa subunit family. NDH-1 is composed of 14 different subunits. Subunits NuoB, C, D, E, F, and G constitute the peripheral sector of the complex. The cofactor is [4Fe-4S] cluster.

The protein localises to the cell inner membrane. The catalysed reaction is a quinone + NADH + 5 H(+)(in) = a quinol + NAD(+) + 4 H(+)(out). Its function is as follows. NDH-1 shuttles electrons from NADH, via FMN and iron-sulfur (Fe-S) centers, to quinones in the respiratory chain. The immediate electron acceptor for the enzyme in this species is believed to be ubiquinone. Couples the redox reaction to proton translocation (for every two electrons transferred, four hydrogen ions are translocated across the cytoplasmic membrane), and thus conserves the redox energy in a proton gradient. This is NADH-quinone oxidoreductase subunit B from Protochlamydia amoebophila (strain UWE25).